The chain runs to 61 residues: MARKALKIKAEKEPKFSTRKYTRCKICGRSRAVYRDFGICRLCLRELAHKGSIPGLKKASW.

Positions 24, 27, 40, and 43 each coordinate Zn(2+).

This sequence belongs to the universal ribosomal protein uS14 family. Zinc-binding uS14 subfamily. As to quaternary structure, part of the 30S ribosomal subunit. Contacts proteins S3 and S10. Requires Zn(2+) as cofactor.

Functionally, binds 16S rRNA, required for the assembly of 30S particles and may also be responsible for determining the conformation of the 16S rRNA at the A site. The sequence is that of Small ribosomal subunit protein uS14 from Coprothermobacter proteolyticus (strain ATCC 35245 / DSM 5265 / OCM 4 / BT).